Reading from the N-terminus, the 33-residue chain is Rhinophrynin-33 (33 aa).

In terms of tissue distribution, expressed by the skin glands.

It localises to the secreted. In terms of biological role, non-cytotoxic peptide with immunosuppressive and insulinotropic effects. Induces an increased production of the anti-inflammatory cytokine IL-10 and inhibits production of the pro-inflammatory cytokines TNF-alpha and IL-1beta, when incubated with mouse peritoneal cells. Does not display growth-inhibitory activity against the Gram-positive S.epidermidis and Gram-negative E.coli bacteria and against the opportunistic yeast pathogen C.parapsilosis (MIC&gt;128 uM). In addition, it lacks cytotoxic activity against mouse erythrocytes (LC(50)&gt;500 uM) and A549 human non-small cell lung adenocarcinoma cells (LC(50)&gt;100 uM). Moderately stimulates insulin release from rat clonal beta-cells and mouse pancreatic islets. Its function is as follows. Non-cytotoxic peptide with immunosuppressive but without insulinotropic effects. Inhibits production of the pro-inflammatory cytokines TNF-alpha, but has no effect on IL-10 and IL-1beta production, when incubated with mouse peritoneal cells. Has no activity of stimulation of insulin release. This Rhinophrynus dorsalis (Mexican burrowing toad) protein is Rhinophrynin-33.